We begin with the raw amino-acid sequence, 654 residues long: tRNA uridine 5-carboxymethylaminomethyl modification enzyme MnmG (654 aa).

17–22 lines the FAD pocket; sequence GGGHAG. NAD(+) is bound at residue 289-303; that stretch reads GPRYCPSIEDKIVKF.

The protein belongs to the MnmG family. As to quaternary structure, homodimer. Heterotetramer of two MnmE and two MnmG subunits. Requires FAD as cofactor.

Its subcellular location is the cytoplasm. Functionally, NAD-binding protein involved in the addition of a carboxymethylaminomethyl (cmnm) group at the wobble position (U34) of certain tRNAs, forming tRNA-cmnm(5)s(2)U34. This is tRNA uridine 5-carboxymethylaminomethyl modification enzyme MnmG from Prochlorococcus marinus subsp. pastoris (strain CCMP1986 / NIES-2087 / MED4).